The sequence spans 154 residues: MHCPFCGANDTKVIDSRLVAEGEQVRRRRECVACGERFTTFETAELVLPRLIKQDGTRQPFDEEKLRAGMQRALEKRPVSVERLEAALAHIKSRLRATGEREVKSLVVGEMVMAELRKLDEVAYIRFASVYRRFQDLDEFREEIDRLAREPARE.

A zinc finger lies at 3–34 (CPFCGANDTKVIDSRLVAEGEQVRRRRECVAC). The ATP-cone domain maps to 49-139 (PRLIKQDGTR…VYRRFQDLDE (91 aa)).

Belongs to the NrdR family. The cofactor is Zn(2+).

Functionally, negatively regulates transcription of bacterial ribonucleotide reductase nrd genes and operons by binding to NrdR-boxes. The sequence is that of Transcriptional repressor NrdR from Pseudomonas putida (strain GB-1).